The sequence spans 889 residues: Cytoplasmic aconitate hydratase (889 aa).

Substrate contacts are provided by residues Gln-86 and 205-207 (DSH). [4Fe-4S] cluster contacts are provided by Cys-437, Cys-503, and Cys-506. Substrate contacts are provided by residues Arg-536, Arg-541, Arg-699, and 779-780 (SR).

The protein belongs to the aconitase/IPM isomerase family. [4Fe-4S] cluster serves as cofactor.

It localises to the cytoplasm. It is found in the cytosol. The catalysed reaction is citrate = D-threo-isocitrate. In terms of biological role, bifunctional iron sensor that switches between 2 activities depending on iron availability. Iron deprivation, promotes its mRNA binding activity through which it regulates the expression of genes involved in iron uptake, sequestration and utilization. Binds to iron-responsive elements (IRES) in the untranslated region of target mRNAs preventing for instance the translation of ferritin and aminolevulinic acid synthase and stabilizing the transferrin receptor mRNA. Its function is as follows. Conversely, when cellular iron levels are high, binds a 4Fe-4S cluster which precludes RNA binding activity and promotes the aconitase activity, the isomerization of citrate to isocitrate via cis-aconitate. The sequence is that of Cytoplasmic aconitate hydratase (ACO1) from Gallus gallus (Chicken).